Consider the following 39-residue polypeptide: Photosystem II reaction center protein L (39 aa).

Residues 18–38 (SLYWGLLLIFVLAVLFSNYFF) traverse the membrane as a helical segment.

This sequence belongs to the PsbL family. In terms of assembly, PSII is composed of 1 copy each of membrane proteins PsbA, PsbB, PsbC, PsbD, PsbE, PsbF, PsbH, PsbI, PsbJ, PsbK, PsbL, PsbM, PsbT, PsbX, PsbY, PsbZ, Psb30/Ycf12, at least 3 peripheral proteins of the oxygen-evolving complex and a large number of cofactors. It forms dimeric complexes.

The protein resides in the plastid thylakoid membrane. Its function is as follows. One of the components of the core complex of photosystem II (PSII). PSII is a light-driven water:plastoquinone oxidoreductase that uses light energy to abstract electrons from H(2)O, generating O(2) and a proton gradient subsequently used for ATP formation. It consists of a core antenna complex that captures photons, and an electron transfer chain that converts photonic excitation into a charge separation. This subunit is found at the monomer-monomer interface and is required for correct PSII assembly and/or dimerization. The polypeptide is Photosystem II reaction center protein L (Cuscuta gronovii (Common dodder)).